The primary structure comprises 1116 residues: MSFINNILKVFVGDKSQKDVKAIQPIIAKIRTLENSLSNLSHDELRAKTVYFKDIIKQARAEKDTKIENLKLEVEAIQDIDAREDVYAQIDILEKEAYEISEKTLNEILPEAFAVIKETAKRFKENKQITVTATAKDRELSATKSYINLVGDTAVWANSWSAAGKEITWDMIHYDVQLIGGVVLHQGKISEMQTGEGKTLVATLPLYLNALTGNGVHLVTVNDYLAKRDSAWKAPLFEFHGLMVDCIDLHQPNSDARRKAYDADITYGTNNEFGFDYLRDNMAHSPEDLVQRKHNFAIVDEVDSVLIDDARTPLIISGQVVDGDRHEFTELKPKIENLVNIQRQLANGFLTEAKRLIKEGNTKDGGFQLLRAHRALPKNKALIKFLSEEGIKALLQKTENQYMSDNNREMPKVDEALYFVIEEKNNQVELTDSGIEIMSKDTEDTFFVLPDIGTEIARIEKLNLSTEEQGEQKEKLFQDFSVKSERIHTLTQLLKAYTLFEKDTEYVLMDNKVMIVDEQTGRIMDGRRYSDGLHQAIEAKENVKIEDATQTYATVTLQNYFRMYSKLAGMTGTAVTEAGELWEIYKLDVVEIPTNRGMSRIDKEDLIYRSVREKFNAVIEDVVGLSQSGRPVLIGTTSVEISELLSRMLKMRNIPHNVLNAKMHKQEAQIVEEAGKPGVVTIATNMAGRGTDIKLTAEVKAAGGLAIIGTERHDSRRVDRQLRGRAGRQGDPGSSQFYVSLEDNLMRLFGSDRVAKIMDRMGLQEGEVIQHSMMTKSIERAQKKVEENNFGTRKRLLEYDDVMNSQREVVYKRRRHALHGERLKLDIANMMYDTCEVIVEKNKLTGDFKNFEFELIKNLSITSPVTQADFAKLSDIELTGKTYKAASEYYTEKNIRDAHEAFPIIRNVYENPGNSFERIIVPFTDGIKSLNVVTDLKKAYESQGKQLVADFEKNITLAIVDDAWKKHLRKMDEMKQSVQLAVHEQKDPLLIYKFEAFKLFKNMLDGINKEVISFLFKGDLPQQQNNIQEATQIRQKENYIESKDEILNIEEQAERNHEAGQTQQHQVTETIVRDMPKINRNDTVKIQNVANGQIEELKFKKAEILLNAGTWVLVSE.

ATP is bound by residues glutamine 177, 195–199, and aspartate 692; that span reads GEGKT.

It belongs to the SecA family. As to quaternary structure, monomer and homodimer. Part of the essential Sec protein translocation apparatus which comprises SecA, SecYEG and auxiliary proteins SecDF. Other proteins may also be involved.

The protein resides in the cell inner membrane. It is found in the cytoplasm. The enzyme catalyses ATP + H2O + cellular proteinSide 1 = ADP + phosphate + cellular proteinSide 2.. Its function is as follows. Part of the Sec protein translocase complex. Interacts with the SecYEG preprotein conducting channel. Has a central role in coupling the hydrolysis of ATP to the transfer of proteins into and across the cell membrane, serving as an ATP-driven molecular motor driving the stepwise translocation of polypeptide chains across the membrane. The polypeptide is Protein translocase subunit SecA (Flavobacterium psychrophilum (strain ATCC 49511 / DSM 21280 / CIP 103535 / JIP02/86)).